Reading from the N-terminus, the 230-residue chain is Large ribosomal subunit protein uL1 (230 aa).

Belongs to the universal ribosomal protein uL1 family. In terms of assembly, part of the 50S ribosomal subunit.

In terms of biological role, binds directly to 23S rRNA. The L1 stalk is quite mobile in the ribosome, and is involved in E site tRNA release. Its function is as follows. Protein L1 is also a translational repressor protein, it controls the translation of the L11 operon by binding to its mRNA. This Leuconostoc citreum (strain KM20) protein is Large ribosomal subunit protein uL1.